Reading from the N-terminus, the 486-residue chain is Matrilin-3 (486 aa).

Residues 1-28 (MPRPAPARRLPGLLLLLWPLLLLPSAAP) form the signal peptide. Residues 32 to 75 (ARPGFRRLETRGPGGSPGRRPSPAAPDGAPASGTSEPGRARGAG) form a disordered region. Residues 49–64 (GRRPSPAAPDGAPASG) show a composition bias toward low complexity. In terms of domain architecture, VWFA spans 83–258 (DLVFIIDSSR…GVIEKLSSRF (176 aa)). Position 198 is an omega-N-methylarginine (R198). 4 EGF-like domains span residues 264–305 (ALDP…KTCS), 306–347 (ALDR…KTCS), 348–389 (AQDK…KTCS), and 390–431 (VRDK…KTCS). 12 disulfides stabilise this stretch: C268-C279, C275-C289, C291-C304, C310-C321, C317-C331, C333-C346, C352-C363, C359-C373, C375-C388, C394-C405, C401-C415, and C417-C430. S441 bears the Phosphoserine; by FAM20C mark. Position 442 is a phosphothreonine; by FAM20C (T442). Residues 456–480 (DKVSSYLQRLNTKLDDILEKLKINE) adopt a coiled-coil conformation.

Can form homooligomers (monomers, dimers, trimers and tetramers) and heterooligomers with matrilin-1. Interacts with COMP. Component of a complex containing at least CRELD2, MANF, MATN3 and PDIA4. In terms of tissue distribution, expressed only in cartilaginous tissues, such as vertebrae, ribs and shoulders.

The protein localises to the secreted. In terms of biological role, major component of the extracellular matrix of cartilage and may play a role in the formation of extracellular filamentous networks. The sequence is that of Matrilin-3 (MATN3) from Homo sapiens (Human).